A 424-amino-acid polypeptide reads, in one-letter code: Circumsporozoite protein (424 aa).

Positions 1-18 (MMRKLAILSVSSFLFVEA) are cleaved as a signal peptide. The disordered stretch occupies residues 69-339 (SRSLGENDDG…VKNNNNEEPS (271 aa)). A compositionally biased stretch (basic and acidic residues) spans 85–106 (NNREGKDEDKRDGNNEDNETLR). The required for the binding to heparan sulfate proteoglycans (HSPGs) on the surface of host hepatocytes stretch occupies residues 104-111 (TLRKPKHK). Positions 112–116 (KLKQP) are region I; contains the proteolytic cleavage site. Low complexity predominate over residues 120 to 300 (NPDPNANPNV…PNANPNANPN (181 aa)). Repeat copies occupy residues 123-126 (PNAN), 127-130 (PNVD), 131-134 (PNAN), 135-138 (PNVD), 139-142 (PNAN), 143-146 (PNVD), 147-150 (PNAN), 151-154 (PNAN), 155-158 (PNAN), 159-162 (PNAN), 163-166 (PNAN), 167-170 (PNAN), 171-174 (PNAN), 175-178 (PNAN), 179-182 (PNAN), 183-186 (PNAN), 187-190 (PNAN), 191-194 (PNAN), 195-198 (PNAN), 199-202 (PNAN), 203-206 (PNAN), 207-210 (PNAN), 211-214 (PNAN), 215-218 (PNAN), 219-222 (PNAN), 223-226 (PNAN), 227-230 (PNAN), 231-234 (PNAN), 235-238 (PNAN), 239-242 (PNAN), 243-246 (PNAN), 247-250 (PNAN), 251-254 (PNAN), 255-258 (PNAN), 259-262 (PNAN), 263-266 (PNAN), 267-270 (PNAN), 271-274 (PNAN), 275-278 (PNAN), 279-282 (PNAN), 283-286 (PNAN), 287-290 (PNAN), 291-294 (PNAN), and 295-298 (PNAN). The tract at residues 123–298 (PNANPNVDPN…ANPNANPNAN (176 aa)) is 44 X 4 AA tandem repeats of P-N-[AV]-[ND]. The span at 301–316 (KNNQGNGQGHNMPNDP) shows a compositional bias: polar residues. A compositionally biased stretch (low complexity) spans 322-336 (ENANANNAVKNNNNE). The region spanning 349-402 (KIQNSLSTEWSPCSVTCGNGIQVRIKPGSANKPKDELDYENDIEKKICKMEKCS) is the TSP type-1 domain. 2 disulfide bridges follow: C361–C396 and C365–C401. The O-linked (Fuc) threonine glycan is linked to T364. C401 carries the GPI-anchor amidated cysteine lipid modification. Positions 402–424 (SSVFNVVNSSIGLIMVLSFLFLN) are cleaved as a propeptide — removed in mature form.

This sequence belongs to the plasmodium circumsporozoite protein family. Post-translationally, during host cell invasion, proteolytically cleaved at the cell membrane in the region I by a papain-like cysteine protease of parasite origin. Cleavage is triggered by the sporozoite contact with highly sulfated heparan sulfate proteoglycans (HSPGs) present on the host hepatocyte cell surface. Cleavage exposes the TSP type-1 (TSR) domain and is required for productive invasion of host hepatocytes but not for adhesion to the host cell membrane. Cleavage is dispensable for sporozoite development in the oocyst, motility and for traversal of host and vector cells. In terms of processing, O-glycosylated; maybe by POFUT2.

It is found in the cell membrane. The protein localises to the cytoplasm. Its function is as follows. Essential sporozoite protein. In the mosquito vector, required for sporozoite development in the oocyst, migration through the vector hemolymph and entry into the vector salivary glands. In the vertebrate host, required for sporozoite migration through the host dermis and infection of host hepatocytes. Binds to highly sulfated heparan sulfate proteoglycans (HSPGs) on the surface of host hepatocytes. In the vertebrate host, binds to highly sulfated heparan sulfate proteoglycans (HSPGs) on the surface of host hepatocytes and is required for sporozoite invasion of the host hepatocytes. The sequence is that of Circumsporozoite protein from Plasmodium falciparum (isolate t4 / Thailand).